Here is a 291-residue protein sequence, read N- to C-terminus: Ribosomal RNA small subunit methyltransferase H (291 aa).

S-adenosyl-L-methionine contacts are provided by residues 31-33 (GGY), aspartate 49, phenylalanine 76, aspartate 97, and glutamine 104.

The protein belongs to the methyltransferase superfamily. RsmH family.

It is found in the cytoplasm. The catalysed reaction is cytidine(1402) in 16S rRNA + S-adenosyl-L-methionine = N(4)-methylcytidine(1402) in 16S rRNA + S-adenosyl-L-homocysteine + H(+). Functionally, specifically methylates the N4 position of cytidine in position 1402 (C1402) of 16S rRNA. The polypeptide is Ribosomal RNA small subunit methyltransferase H (Anaplasma marginale (strain Florida)).